Reading from the N-terminus, the 707-residue chain is Protein O-mannosyl-transferase TMEM260 (707 aa).

The next 8 membrane-spanning stretches (helical) occupy residues 28–48 (GGVA…PPSV), 71–91 (YPLF…GSIA), 94–114 (VNLL…FTVF), 141–161 (IAAE…ALTV), 189–209 (NQHT…FQLL), 222–242 (LSLY…SSYL), 318–338 (NPSL…FFAW), and 356–376 (FWMQ…AAVV). Residues 377–707 (SETNRVLNSN…LQSLRNRKNV (331 aa)) lie on the Lumenal side of the membrane. 3 N-linked (GlcNAc...) asparagine glycosylation sites follow: N407, N535, and N568.

Belongs to the glycosyltransferase 117 (GT117) family. In terms of tissue distribution, expressed in brain, heart, kidney, liver, lung, pancreas and placenta but are not detected in skeletal muscle.

It localises to the endoplasmic reticulum membrane. It is found in the membrane. The enzyme catalyses a di-trans,poly-cis-dolichyl beta-D-mannosyl phosphate + L-seryl-[protein] = 3-O-(alpha-D-mannosyl)-L-seryl-[protein] + a di-trans,poly-cis-dolichyl phosphate + H(+). The catalysed reaction is a di-trans,poly-cis-dolichyl beta-D-mannosyl phosphate + L-threonyl-[protein] = 3-O-(alpha-D-mannosyl)-L-threonyl-[protein] + a di-trans,poly-cis-dolichyl phosphate + H(+). In terms of biological role, O-mannosyl-transferase that transfers mannosyl residues to the hydroxyl group of serine or threonine residues of proteins. Specifically glycosylates the IPT/TIG domain of target proteins, such as MET and MST1R/RON. TMEM260-mediated O-mannosylated residues are composed of single mannose glycans that are not elongated or modified. The polypeptide is Protein O-mannosyl-transferase TMEM260 (Homo sapiens (Human)).